The chain runs to 466 residues: Soluble pyridine nucleotide transhydrogenase (466 aa).

36–45 provides a ligand contact to FAD; it reads ERYQNVGGGC.

This sequence belongs to the class-I pyridine nucleotide-disulfide oxidoreductase family. FAD serves as cofactor.

It is found in the cytoplasm. It carries out the reaction NAD(+) + NADPH = NADH + NADP(+). In terms of biological role, conversion of NADPH, generated by peripheral catabolic pathways, to NADH, which can enter the respiratory chain for energy generation. This chain is Soluble pyridine nucleotide transhydrogenase, found in Escherichia coli O127:H6 (strain E2348/69 / EPEC).